A 397-amino-acid polypeptide reads, in one-letter code: Ubiquitin-like modifier-activating enzyme 5 (397 aa).

5 residues coordinate ATP: Gly76, Asp97, Lys120, Asn143, and Asn177. The Zn(2+) site is built by Cys219 and Cys222. Cys243 functions as the Glycyl thioester intermediate in the catalytic mechanism. Residues Cys296 and Cys301 each coordinate Zn(2+). Positions 327–339 (IVHEDNDWGIELV) match the UFM1-interacting sequence (UIS) motif. Residues 340-370 (SETTEDELKAASGPVPDLPVGITVAYTIPNK) are linker. Residues 382 to 397 (ESEESLEDLMAKMRNL) carry the UFC1-binding sequence (UFC) motif.

Belongs to the ubiquitin-activating E1 family. UBA5 subfamily. In terms of assembly, homodimer; homodimerization is required for UFM1 activation. Interacts (via UIS motif) with UFM1; binds UFM1 via a trans-binding mechanism in which UFM1 interacts with distinct sites in both subunits of the UBA5 homodimer. Interacts (via C-terminus) with UFC1.

It localises to the cytoplasm. The protein resides in the nucleus. It is found in the endoplasmic reticulum membrane. Its subcellular location is the golgi apparatus. Its function is as follows. E1-like enzyme which specifically catalyzes the first step in ufmylation. Activates UFM1 by first adenylating its C-terminal glycine residue with ATP, and thereafter linking this residue to the side chain of a cysteine residue in E1, yielding a UFM1-E1 thioester and free AMP. Activates UFM1 via a trans-binding mechanism, in which UFM1 interacts with distinct sites in both subunits of the UBA5 homodimer. Trans-binding also promotes stabilization of the UBA5 homodimer, and enhances ATP-binding. Transfer of UFM1 from UBA5 to the E2-like enzyme UFC1 also takes place using a trans mechanism. Ufmylation plays a key role in various processes, such as ribosome recycling, response to DNA damage, interferon response or reticulophagy (also called ER-phagy). The chain is Ubiquitin-like modifier-activating enzyme 5 from Gallus gallus (Chicken).